Reading from the N-terminus, the 544-residue chain is Methionine--tRNA ligase 2 (544 aa).

Positions 10–20 match the 'HIGH' region motif; sequence PYANGSLHLGH. Residues Cys141, Cys144, Cys153, and Cys156 each coordinate Zn(2+). Positions 329-333 match the 'KMSKS' region motif; the sequence is KLSTS. Thr332 is an ATP binding site.

Belongs to the class-I aminoacyl-tRNA synthetase family. MetG type 1 subfamily. In terms of assembly, monomer. It depends on Zn(2+) as a cofactor.

Its subcellular location is the cytoplasm. The catalysed reaction is tRNA(Met) + L-methionine + ATP = L-methionyl-tRNA(Met) + AMP + diphosphate. Is required not only for elongation of protein synthesis but also for the initiation of all mRNA translation through initiator tRNA(fMet) aminoacylation. The polypeptide is Methionine--tRNA ligase 2 (Bacillus cereus (strain ATCC 14579 / DSM 31 / CCUG 7414 / JCM 2152 / NBRC 15305 / NCIMB 9373 / NCTC 2599 / NRRL B-3711)).